We begin with the raw amino-acid sequence, 580 residues long: Trafficking protein particle complex subunit 14 (580 aa).

Disordered regions lie at residues 95–134 (GSAGDQDADPPGGGDPGGGGLFRGCSPLLTHGQGPATSGG) and 480–533 (VSHP…RSGS). Over residues 105-116 (PGGGDPGGGGLF) the composition is skewed to gly residues. S491 bears the Phosphoserine mark. Positions 492–502 (RKSSPSSPAVR) are enriched in low complexity. Positions 512–525 (LGRSQSFSHQQPSR) are enriched in polar residues. S517 carries the post-translational modification Phosphoserine. A Phosphothreonine modification is found at T541. Position 546 is a phosphoserine (S546).

In terms of assembly, component of the multisubunit TRAPP II complex, which includes at least TRAPPC1, TRAPPC2, TRAPPC2L, TRAPPC3, TRAPPC4, TRAPPC5, TRAPPC6A/B, TRAPPC9, TRAPPC10 and TRAPPC14. TRAPPC9, TRAPPC10 and TRAPPC14 are specific subunits of the TRAPP II complex. Interacts with alpha-tubulin during mitosis. Interacts with RAB3IP (via the N-terminal region); this interaction mediates RAB3IP association with the TRAPP II complex. Interacts with TRAPPC10. Interacts with FBF1.

Its subcellular location is the cytoplasm. The protein resides in the cytoskeleton. It is found in the spindle. It localises to the vesicle. The protein localises to the midbody. Specific subunit of the TRAPP (transport protein particle) II complex, a highly conserved vesicle tethering complex that functions in late Golgi trafficking as a membrane tether. TRAPPC14 is dispensable for TRAPPII complex integrity but mediates RAB3IP preciliary vesicle trafficking to the mother centriole during ciliogenesis. Modulates YAP1 activity as transcriptional regulator. This is Trafficking protein particle complex subunit 14 from Mus musculus (Mouse).